Here is a 353-residue protein sequence, read N- to C-terminus: 3-dehydroquinate synthase (353 aa).

NAD(+)-binding positions include 62–67 (DGEQYK), 96–100 (GVIGD), 120–121 (TT), Lys133, and Lys142. Zn(2+)-binding residues include Glu175, His236, and His253.

It belongs to the sugar phosphate cyclases superfamily. Dehydroquinate synthase family. NAD(+) serves as cofactor. The cofactor is Co(2+). Requires Zn(2+) as cofactor.

The protein localises to the cytoplasm. The enzyme catalyses 7-phospho-2-dehydro-3-deoxy-D-arabino-heptonate = 3-dehydroquinate + phosphate. It functions in the pathway metabolic intermediate biosynthesis; chorismate biosynthesis; chorismate from D-erythrose 4-phosphate and phosphoenolpyruvate: step 2/7. Functionally, catalyzes the conversion of 3-deoxy-D-arabino-heptulosonate 7-phosphate (DAHP) to dehydroquinate (DHQ). The chain is 3-dehydroquinate synthase from Helicobacter hepaticus (strain ATCC 51449 / 3B1).